The following is a 158-amino-acid chain: 2-C-methyl-D-erythritol 2,4-cyclodiphosphate synthase (158 aa).

Positions 9 and 11 each coordinate a divalent metal cation. 4-CDP-2-C-methyl-D-erythritol 2-phosphate-binding positions include 9–11 (DVH) and 35–36 (HS). An a divalent metal cation-binding site is contributed by His-43. Residues 57-59 (DIG), 62-66 (FPDTD), 101-107 (AQKPKMA), 133-136 (TTTE), Phe-140, and Arg-143 contribute to the 4-CDP-2-C-methyl-D-erythritol 2-phosphate site.

It belongs to the IspF family. As to quaternary structure, homotrimer. The cofactor is a divalent metal cation.

The catalysed reaction is 4-CDP-2-C-methyl-D-erythritol 2-phosphate = 2-C-methyl-D-erythritol 2,4-cyclic diphosphate + CMP. Its pathway is isoprenoid biosynthesis; isopentenyl diphosphate biosynthesis via DXP pathway; isopentenyl diphosphate from 1-deoxy-D-xylulose 5-phosphate: step 4/6. Involved in the biosynthesis of isopentenyl diphosphate (IPP) and dimethylallyl diphosphate (DMAPP), two major building blocks of isoprenoid compounds. Catalyzes the conversion of 4-diphosphocytidyl-2-C-methyl-D-erythritol 2-phosphate (CDP-ME2P) to 2-C-methyl-D-erythritol 2,4-cyclodiphosphate (ME-CPP) with a corresponding release of cytidine 5-monophosphate (CMP). This Bacillus cereus (strain ATCC 10987 / NRS 248) protein is 2-C-methyl-D-erythritol 2,4-cyclodiphosphate synthase.